The sequence spans 418 residues: Queuine tRNA-ribosyltransferase accessory subunit 2 (418 aa).

Zn(2+) is bound by residues Cys325, Cys327, Cys330, and His356.

This sequence belongs to the queuine tRNA-ribosyltransferase family. QTRT2 subfamily. In terms of assembly, heterodimer of a catalytic subunit and an accessory subunit. The cofactor is Zn(2+).

It is found in the cytoplasm. Its function is as follows. Non-catalytic subunit of the queuine tRNA-ribosyltransferase (TGT) that catalyzes the base-exchange of a guanine (G) residue with queuine (Q) at position 34 (anticodon wobble position) in tRNAs with GU(N) anticodons (tRNA-Asp, -Asn, -His and -Tyr), resulting in the hypermodified nucleoside queuosine (7-(((4,5-cis-dihydroxy-2-cyclopenten-1-yl)amino)methyl)-7-deazaguanosine). In Drosophila melanogaster (Fruit fly), this protein is Queuine tRNA-ribosyltransferase accessory subunit 2.